The following is a 343-amino-acid chain: MKTHERAANLALAGLSLAPLVVKVEPNVNVILTACLAVYVGCYRSVKPTPPSETMSKEHAMRFPLVGSAMLLSLFLLFKFLSKDLVNAVLTAYFFILGIAALCATLLPSIKRFLPKEWNDNAIVWCAPFFHSLSVEFTKSQVVASIPGFFFCIWYAAKKHWLANNVLGISFCIQGIEMLSLGSFKTGAILLAGLFFYDIFWVFFTPVMVSVAKSFDAPIKLLFPTGDAARPFSMLGLGDIVIPGIFVALALRFDVSRGIKNRYFNSAFLGYTVGLTVTIIVMNWFQAAQPALLYIVPGVIGFVAVHCLWNGEVKPLLEYNESKAEEEDAVEEDTDSKQNKKEE.

Topologically, residues 1-19 (MKTHERAANLALAGLSLAP) are lumenal. The chain crosses the membrane as a helical span at residues 20 to 40 (LVVKVEPNVNVILTACLAVYV). Over 41–62 (GCYRSVKPTPPSETMSKEHAMR) the chain is Cytoplasmic. Residues 63-83 (FPLVGSAMLLSLFLLFKFLSK) traverse the membrane as a helical segment. The Lumenal segment spans residues 84–87 (DLVN). The chain crosses the membrane as a helical span at residues 88–108 (AVLTAYFFILGIAALCATLLP). Residues 109-136 (SIKRFLPKEWNDNAIVWCAPFFHSLSVE) are Cytoplasmic-facing. The helical transmembrane segment at 137–157 (FTKSQVVASIPGFFFCIWYAA) threads the bilayer. Residues 158 to 160 (KKH) are Lumenal-facing. A helical transmembrane segment spans residues 161-181 (WLANNVLGISFCIQGIEMLSL). The Cytoplasmic segment spans residues 182–188 (GSFKTGA). A helical transmembrane segment spans residues 189–209 (ILLAGLFFYDIFWVFFTPVMV). Asp198 is a catalytic residue. Over 210-230 (SVAKSFDAPIKLLFPTGDAAR) the chain is Lumenal. A helical transmembrane segment spans residues 231–251 (PFSMLGLGDIVIPGIFVALAL). Asp239 is a catalytic residue. Topologically, residues 252 to 266 (RFDVSRGIKNRYFNS) are cytoplasmic. Residues 267 to 287 (AFLGYTVGLTVTIIVMNWFQA) traverse the membrane as a helical segment. At 288–290 (AQP) the chain is on the lumenal side. Positions 290-292 (PAL) match the PAL motif. A helical membrane pass occupies residues 291-311 (ALLYIVPGVIGFVAVHCLWNG). The Cytoplasmic segment spans residues 312 to 343 (EVKPLLEYNESKAEEEDAVEEDTDSKQNKKEE). The segment at 322–343 (SKAEEEDAVEEDTDSKQNKKEE) is disordered. A compositionally biased stretch (acidic residues) spans 324 to 334 (AEEEDAVEEDT). An Endoplasmic reticulum targeting signal motif is present at residues 340–343 (KKEE).

Belongs to the peptidase A22B family. Ubiquitous.

The protein localises to the endoplasmic reticulum membrane. Its function is as follows. Intramembrane-cleaving aspartic protease (I-CLiP) that cleaves type II membrane signal peptides in the hydrophobic plane of the membrane. Catalyzes intramembrane proteolysis of some signal peptides after they have been cleaved from a preprotein, resulting in the release of the fragment from the ER membrane into the cytoplasm. In Oryza sativa subsp. japonica (Rice), this protein is Signal peptide peptidase 1 (SPP1).